The following is a 406-amino-acid chain: MTQSQLRNGPDDNGLFGAFGGRYVAETLMPLILDLAREYEKAKEDPEFLKELAYFQRDYVGRPSPLYFAERLTEHCGGAKIYLKREELNHTGAHKINNCIGQILLARRMGKKRIIAETGAGMHGVATATVAARFGLDCVIYMGTTDIERQQANVFRMKLLGAEVIPVVAGTGTLKDAMNEALRDWVTNVDSTFYLIGTVAGPHPYPAMVRDFQAVIGKETREQMQAQEGRLPDSLVACIGGGSNAMGLFHPFLDDKSVEIIGVEAAGYGIETGKHAASLNGGVPGVLHGNRTFLLQDDDGQIIDAHSISAGLDYPGIGPEHAWLHDIGRVEYTSVTDDEALAAFHQCCRLEGIIPALESAHALAEVFKRAPNLPKDHLMVVNLSGRGDKDMQTVMHHMQQSQQEKH.

Lys95 bears the N6-(pyridoxal phosphate)lysine mark.

Belongs to the TrpB family. In terms of assembly, tetramer of two alpha and two beta chains. Pyridoxal 5'-phosphate serves as cofactor.

The enzyme catalyses (1S,2R)-1-C-(indol-3-yl)glycerol 3-phosphate + L-serine = D-glyceraldehyde 3-phosphate + L-tryptophan + H2O. Its pathway is amino-acid biosynthesis; L-tryptophan biosynthesis; L-tryptophan from chorismate: step 5/5. The beta subunit is responsible for the synthesis of L-tryptophan from indole and L-serine. This chain is Tryptophan synthase beta chain, found in Pseudomonas fluorescens (strain ATCC BAA-477 / NRRL B-23932 / Pf-5).